The sequence spans 617 residues: 5-hydroxytryptamine receptor 2B (617 aa).

The Extracellular portion of the chain corresponds to Met1–Val95. N-linked (GlcNAc...) asparagine glycosylation is found at Asn31, Asn41, Asn51, and Asn58. A helical membrane pass occupies residues Val96 to Ile116. Residues Leu117–Leu128 lie on the Cytoplasmic side of the membrane. The helical transmembrane segment at Val129–Val149 threads the bilayer. At Tyr150–Asp164 the chain is on the extracellular side. An intrachain disulfide couples Cys163 to Cys242. Residues Ile165 to Ala185 form a helical membrane-spanning segment. Topologically, residues Ala186–Arg205 are cytoplasmic. A helical transmembrane segment spans residues Val206 to Phe226. Over Gly227–Cys256 the chain is Extracellular. Residues Cys257–Ala277 traverse the membrane as a helical segment. At Arg278–Gln534 the chain is on the cytoplasmic side. The segment at Arg309–Leu336 is disordered. Residues Lys317–Val327 show a composition bias toward basic and acidic residues. Residues Thr535–Leu555 traverse the membrane as a helical segment. At Thr556–Ala570 the chain is on the extracellular side. Residues Ser571 to Phe591 form a helical membrane-spanning segment. The Cytoplasmic segment spans residues Asn592–Ile617.

The protein belongs to the G-protein coupled receptor 1 family.

The protein localises to the cell membrane. Functionally, this is one of the several different receptors for 5-hydroxytryptamine (serotonin), a biogenic hormone that functions as a neurotransmitter, a hormone, and a mitogen. The activity of this receptor is mediated by G proteins which inhibit adenylate cyclase. The protein is 5-hydroxytryptamine receptor 2B (5-HT1B) of Drosophila melanogaster (Fruit fly).